A 115-amino-acid polypeptide reads, in one-letter code: UPF0738 protein SE_0694 (115 aa).

The protein belongs to the UPF0738 family.

The chain is UPF0738 protein SE_0694 from Staphylococcus epidermidis (strain ATCC 12228 / FDA PCI 1200).